Reading from the N-terminus, the 299-residue chain is N-acetylmuramic acid 6-phosphate etherase (299 aa).

One can recognise an SIS domain in the interval 57-220 (ISAAFHKKGR…TTGAMIRTGK (164 aa)). The active-site Proton donor is Glu-85. Glu-116 is a catalytic residue.

It belongs to the GCKR-like family. MurNAc-6-P etherase subfamily. As to quaternary structure, homodimer.

The enzyme catalyses N-acetyl-D-muramate 6-phosphate + H2O = N-acetyl-D-glucosamine 6-phosphate + (R)-lactate. It functions in the pathway amino-sugar metabolism; 1,6-anhydro-N-acetylmuramate degradation. Its pathway is amino-sugar metabolism; N-acetylmuramate degradation. The protein operates within cell wall biogenesis; peptidoglycan recycling. Its function is as follows. Specifically catalyzes the cleavage of the D-lactyl ether substituent of MurNAc 6-phosphate, producing GlcNAc 6-phosphate and D-lactate. Together with AnmK, is also required for the utilization of anhydro-N-acetylmuramic acid (anhMurNAc) either imported from the medium or derived from its own cell wall murein, and thus plays a role in cell wall recycling. In Psychromonas ingrahamii (strain DSM 17664 / CCUG 51855 / 37), this protein is N-acetylmuramic acid 6-phosphate etherase.